The following is an 82-amino-acid chain: uncharacterized protein (82 aa).

This is an uncharacterized protein from Ictaluridae (bullhead catfishes).